Here is a 91-residue protein sequence, read N- to C-terminus: Small ribosomal subunit protein uS19 (91 aa).

Belongs to the universal ribosomal protein uS19 family.

Its function is as follows. Protein S19 forms a complex with S13 that binds strongly to the 16S ribosomal RNA. This chain is Small ribosomal subunit protein uS19, found in Bordetella petrii (strain ATCC BAA-461 / DSM 12804 / CCUG 43448).